The chain runs to 1641 residues: Ophiophagus venom factor (1641 aa).

The signal sequence occupies residues 1-22 (MEGMALYLVAALLIGFPGSSHG). 2 N-linked (GlcNAc...) asparagine glycosylation sites follow: N181 and N209. Positions 507, 530, 531, and 533 each coordinate Mg(2+). Intrachain disulfides connect C535–C796, C604–C639, C672–C699, C673–C706, C686–C707, C852–C1491, C1336–C1467, C1367–C1436, C1484–C1489, C1496–C1568, C1515–C1639, and C1615–C1624. Residues 645-728 (RRRRSSVLLL…WESGLFLPRN (84 aa)) constitute a propeptide that is removed on maturation. Positions 649–727 (SSVLLLDSKA…QWESGLFLPR (79 aa)) are C3a-like domain. In terms of domain architecture, Anaphylatoxin-like spans 672 to 707 (CCEDSMHENPMGYTCEKRAKYIQEGDACKAAFLECC). The interval 731–742 (EDGFIQDSDIIP) is factor B binding site. Positions 981–1259 (HLIITPSGCG…VMLFQALAEY (279 aa)) are excised as a propeptide. The C3d-like domain stretch occupies residues 981–1259 (HLIITPSGCG…VMLFQALAEY (279 aa)). A cross-link (isoglutamyl cysteine thioester (Cys-Gln)) is located at residues 989 to 992 (CGEQ). Residues 1186–1249 (VLMAASTGKN…GGTYGQTQAT (64 aa)) form a factor H binding site region. The 144-residue stretch at 1496–1639 (CSLLSQQEKI…LSNILTIFGC (144 aa)) folds into the NTR domain.

The protein belongs to the venom complement C3 homolog family. Heterotrimer of alpha, beta and gamma chains; disulfide-linked. May be active with factor B in the presence of factor D. Post-translationally, first processed by the removal of 4 Arg residues by furin-type protease, forming two chains, alpha and gamma/beta precursor, linked by a disulfide bond. Probably, a cobrin-like protease cleaves the C3a-like domain and then the C3d-like domain, generating the mature venom factor (OVF). The beta chain is not glycosylated. In terms of tissue distribution, expressed by the venom gland.

It localises to the secreted. In terms of biological role, complement-activating protein in cobra venom. It is a structural and functional analog of complement component C3b, the activated form of C3. It binds factor B (CFB), which is subsequently cleaved by factor D (CFD) to form the bimolecular complex OVF/Bb. OVF/Bb is a C3/C5 convertase that cleaves both complement components C3 and C5. Structurally, it resembles the C3b degradation product C3c, which is not able to form a C3/C5 convertase. Unlike C3b/Bb, OVF/Bb is a stable complex and completely resistant to the actions of complement regulatory factors H (CFH) and I (CFI). Therefore, OVF continuously activates complement. As a result, OVF exhibits complement-depleting activity. This is Ophiophagus venom factor from Ophiophagus hannah (King cobra).